The following is a 465-amino-acid chain: Mothers against decapentaplegic homolog 5 (465 aa).

Threonine 2 bears the N-acetylthreonine mark. The MH1 domain occupies 13 to 137 (PAVKRLLGWK…YKRVESPVLP (125 aa)). Zn(2+) is bound by residues cysteine 65, cysteine 110, cysteine 122, and histidine 127. Residues 163–251 (NEPHMPQNAT…DTSSNMIPQT (89 aa)) form a disordered region. A compositionally biased stretch (polar residues) spans 169-182 (QNATFPDSFHQPNN). The span at 186-197 (PLSPNSPYPPSP) shows a compositional bias: pro residues. Low complexity predominate over residues 198–214 (ASSTYPNSPASSGPGSP). Residues 237 to 251 (NSQPMDTSSNMIPQT) show a composition bias toward polar residues. Residues 271–465 (WCSIVYYELN…SPLNPISSVS (195 aa)) enclose the MH2 domain. Phosphoserine is present on residues serine 463 and serine 465.

The protein belongs to the dwarfin/SMAD family. Homodimer. Forms trimers with the co-SMAD SMAD4. Interacts with PEBP2-alpha subunit and SMURF1. Interacts with SUV39H1 and SUV39H2. Interacts (via MH2 domain) with LEMD3. Interacts with WWP1. Interacts with TMEM119. Interacts with ZNF8. Interacts with RANBP3L. Interacts with HK1. Interacts with HGS; this interaction attenuates BMP signaling. Post-translationally, phosphorylated on serine by BMP (bone morphogenetic proteins) type 1 receptor kinase. In terms of processing, ubiquitin-mediated proteolysis by SMAD-specific E3 ubiquitin ligase SMURF1. In terms of tissue distribution, predominantly expressed in mesenchyme and somites during embryogenesis, and present in many tissues of the adult.

The protein localises to the cytoplasm. Its subcellular location is the nucleus. It is found in the mitochondrion. Functionally, transcriptional regulator that plays a role in various cellular processes including embryonic development, cell differentiation, angiogenesis and tissue homeostasis. Upon BMP ligand binding to their receptors at the cell surface, is phosphorylated by activated type I BMP receptors (BMPRIs) and associates with SMAD4 to form a heteromeric complex which translocates into the nucleus acting as transcription factor. In turn, the hetero-trimeric complex recognizes cis-regulatory elements containing Smad Binding Elements (SBEs) to modulate the outcome of the signaling network. Non-phosphorylated SMAD5 has a cytoplasmic role in energy metabolism regulation by promoting mitochondrial respiration and glycolysis in response to cytoplasmic pH changes. Mechanistically, interacts with hexokinase 1/HK1 and thereby accelerates glycolysis. The sequence is that of Mothers against decapentaplegic homolog 5 (Smad5) from Mus musculus (Mouse).